A 180-amino-acid chain; its full sequence is Ribulose bisphosphate carboxylase small subunit, chloroplastic 3 (180 aa).

The transit peptide at methionine 1–glutamine 56 directs the protein to the chloroplast.

The protein belongs to the RuBisCO small chain family. In terms of assembly, heterohexadecamer of 8 large and 8 small subunits.

The protein resides in the plastid. Its subcellular location is the chloroplast. RuBisCO catalyzes two reactions: the carboxylation of D-ribulose 1,5-bisphosphate, the primary event in carbon dioxide fixation, as well as the oxidative fragmentation of the pentose substrate. Both reactions occur simultaneously and in competition at the same active site. Although the small subunit is not catalytic it is essential for maximal activity. This is Ribulose bisphosphate carboxylase small subunit, chloroplastic 3 from Amaranthus hypochondriacus (Prince-of-Wales feather).